The sequence spans 404 residues: Cysteine desulfurase IscS (404 aa).

Residues 75–76, asparagine 155, glutamine 183, and 203–205 each bind pyridoxal 5'-phosphate; these read AT and SAH. Lysine 206 is subject to N6-(pyridoxal phosphate)lysine. Threonine 243 is a pyridoxal 5'-phosphate binding site. Cysteine 328 acts as the Cysteine persulfide intermediate in catalysis. Position 328 (cysteine 328) interacts with [2Fe-2S] cluster.

This sequence belongs to the class-V pyridoxal-phosphate-dependent aminotransferase family. NifS/IscS subfamily. As to quaternary structure, homodimer. Forms a heterotetramer with IscU, interacts with other sulfur acceptors. The cofactor is pyridoxal 5'-phosphate.

Its subcellular location is the cytoplasm. It carries out the reaction (sulfur carrier)-H + L-cysteine = (sulfur carrier)-SH + L-alanine. It participates in cofactor biosynthesis; iron-sulfur cluster biosynthesis. Master enzyme that delivers sulfur to a number of partners involved in Fe-S cluster assembly, tRNA modification or cofactor biosynthesis. Catalyzes the removal of elemental sulfur atoms from cysteine to produce alanine. Functions as a sulfur delivery protein for Fe-S cluster synthesis onto IscU, an Fe-S scaffold assembly protein, as well as other S acceptor proteins. The protein is Cysteine desulfurase IscS of Pseudomonas syringae pv. syringae (strain B728a).